Reading from the N-terminus, the 550-residue chain is Hydroxylamine reductase (550 aa).

4 residues coordinate [2Fe-2S] cluster: Cys-3, Cys-6, Cys-18, and Cys-25. Hybrid [4Fe-2O-2S] cluster is bound by residues His-249, Glu-273, Cys-317, Cys-405, Cys-433, Cys-458, Glu-492, and Lys-494. Position 405 is a cysteine persulfide (Cys-405).

It belongs to the HCP family. Requires [2Fe-2S] cluster as cofactor. It depends on hybrid [4Fe-2O-2S] cluster as a cofactor.

It localises to the cytoplasm. It carries out the reaction A + NH4(+) + H2O = hydroxylamine + AH2 + H(+). Functionally, catalyzes the reduction of hydroxylamine to form NH(3) and H(2)O. The polypeptide is Hydroxylamine reductase (Salmonella schwarzengrund (strain CVM19633)).